Consider the following 351-residue polypeptide: Glycerol-1-phosphate dehydrogenase [NAD(P)+] (351 aa).

Residues 98–102 and 120–123 contribute to the NAD(+) site; these read GSIID and TTAS. Residue aspartate 125 coordinates substrate. An NAD(+)-binding site is contributed by serine 129. Aspartate 172 is a binding site for substrate. Zn(2+)-binding residues include aspartate 172 and histidine 252. Histidine 256 contacts substrate. Histidine 268 contributes to the Zn(2+) binding site.

It belongs to the glycerol-1-phosphate dehydrogenase family. Zn(2+) is required as a cofactor.

The protein localises to the cytoplasm. It carries out the reaction sn-glycerol 1-phosphate + NAD(+) = dihydroxyacetone phosphate + NADH + H(+). The enzyme catalyses sn-glycerol 1-phosphate + NADP(+) = dihydroxyacetone phosphate + NADPH + H(+). Its pathway is membrane lipid metabolism; glycerophospholipid metabolism. Its function is as follows. Catalyzes the NAD(P)H-dependent reduction of dihydroxyacetonephosphate (DHAP or glycerone phosphate) to glycerol 1-phosphate (G1P). The G1P thus generated is used as the glycerophosphate backbone of phospholipids in the cellular membranes of Archaea. In Thermococcus kodakarensis (strain ATCC BAA-918 / JCM 12380 / KOD1) (Pyrococcus kodakaraensis (strain KOD1)), this protein is Glycerol-1-phosphate dehydrogenase [NAD(P)+].